A 203-amino-acid polypeptide reads, in one-letter code: Large ribosomal subunit protein uL22 (203 aa).

Composition is skewed to polar residues over residues 116 to 126 (QNGGESQNQEY) and 134 to 167 (VSKS…DSQL). Residues 116–203 (QNGGESQNQE…TVLAQEKEVK (88 aa)) form a disordered region. Over residues 168-194 (SAKTNSTTTAKKTDLADNNTKNDATNT) the composition is skewed to low complexity.

Belongs to the universal ribosomal protein uL22 family. Part of the 50S ribosomal subunit.

Functionally, this protein binds specifically to 23S rRNA; its binding is stimulated by other ribosomal proteins, e.g. L4, L17, and L20. It is important during the early stages of 50S assembly. It makes multiple contacts with different domains of the 23S rRNA in the assembled 50S subunit and ribosome. In terms of biological role, the globular domain of the protein is located near the polypeptide exit tunnel on the outside of the subunit, while an extended beta-hairpin is found that lines the wall of the exit tunnel in the center of the 70S ribosome. The protein is Large ribosomal subunit protein uL22 of Mesomycoplasma hyopneumoniae (strain 232) (Mycoplasma hyopneumoniae).